We begin with the raw amino-acid sequence, 201 residues long: 3-isopropylmalate dehydratase small subunit (201 aa).

This sequence belongs to the LeuD family. LeuD type 1 subfamily. In terms of assembly, heterodimer of LeuC and LeuD.

It carries out the reaction (2R,3S)-3-isopropylmalate = (2S)-2-isopropylmalate. The protein operates within amino-acid biosynthesis; L-leucine biosynthesis; L-leucine from 3-methyl-2-oxobutanoate: step 2/4. Its function is as follows. Catalyzes the isomerization between 2-isopropylmalate and 3-isopropylmalate, via the formation of 2-isopropylmaleate. The sequence is that of 3-isopropylmalate dehydratase small subunit from Ruegeria pomeroyi (strain ATCC 700808 / DSM 15171 / DSS-3) (Silicibacter pomeroyi).